We begin with the raw amino-acid sequence, 158 residues long: MIRIGHGFDVHKFGGEGPVIIGGVAIPYEQGLIAHSDGDVALHALTDALLGAIAAGDIGRHFPDTDDKWKGADSRELLKDVYRRVKEQGYRLGNADVTIMAQAPKMAPHIDAMCAAIAEDLETDISNINVKATTTERLGFTGRKEGIATEAVVLLFKQ.

A divalent metal cation-binding residues include Asp9 and His11. 4-CDP-2-C-methyl-D-erythritol 2-phosphate is bound by residues Asp9–His11 and His35–Ser36. His43 contributes to the a divalent metal cation binding site. 4-CDP-2-C-methyl-D-erythritol 2-phosphate is bound by residues Asp57–Gly59, Phe62–Asp66, Ala101–Ala107, Thr133–Glu136, Phe140, and Arg143.

It belongs to the IspF family. In terms of assembly, homotrimer. A divalent metal cation serves as cofactor.

The enzyme catalyses 4-CDP-2-C-methyl-D-erythritol 2-phosphate = 2-C-methyl-D-erythritol 2,4-cyclic diphosphate + CMP. Its pathway is isoprenoid biosynthesis; isopentenyl diphosphate biosynthesis via DXP pathway; isopentenyl diphosphate from 1-deoxy-D-xylulose 5-phosphate: step 4/6. Functionally, involved in the biosynthesis of isopentenyl diphosphate (IPP) and dimethylallyl diphosphate (DMAPP), two major building blocks of isoprenoid compounds. Catalyzes the conversion of 4-diphosphocytidyl-2-C-methyl-D-erythritol 2-phosphate (CDP-ME2P) to 2-C-methyl-D-erythritol 2,4-cyclodiphosphate (ME-CPP) with a corresponding release of cytidine 5-monophosphate (CMP). The sequence is that of 2-C-methyl-D-erythritol 2,4-cyclodiphosphate synthase from Vibrio campbellii (strain ATCC BAA-1116).